The chain runs to 225 residues: MRLSTLSSLLLGSSSIVFARVPPTVDNQEPIKSTSYFLDDPDFPSHFEFENPETNCKYVSQPWIYNAFNSVSEDMEAVFKYAHPDLHVRIMGHHPFAGYYHNPKMAFVNSLWRLNNCLKDAKVDAKLWAIHGGCDQAWSVQEFYFNATTNKGQPWELTSLWVSRWDEDGLIREVRTWVDAGQIMRTLWDNEIWFNSSDRVHHYDFIPGPGGLPPIANKTELGGEL.

An N-terminal signal peptide occupies residues 1-19; the sequence is MRLSTLSSLLLGSSSIVFA. Residues asparagine 146, asparagine 195, and asparagine 217 are each glycosylated (N-linked (GlcNAc...) asparagine).

The protein belongs to the dimerizing cyclase tstC family.

It catalyses the reaction 2 [4-(deca-1,8-diyl)-2,5-dioxo-2,5-dihydro-3-furanyl]acetate + H(+) = 2-[(1R,8S,14R,15R)-11-hydroxy-14,15-bis[(6E)-oct-6-en-1-yl]-3,5,9-trioxo-4,10-dioxatetracyclo[9.4.0.0(2,6).0(8,12)]pentadeca-2(6),12-dien-8-yl]acetate + CO2. It functions in the pathway secondary metabolite biosynthesis. In terms of biological role, dimerizing cyclase; part of the gene cluster that mediates the biosynthesis of the antihypercholesterolemic agents phomoidrides which are dimeric anhydrides. Within the pathway, tstC produces the bicyclo[4.3.1]deca-1,6-diene core of phomoidrides via the dimerization of the monomeric anhydrides leading to prephomoidride. The pathway begins with the highly reducing polyketide synthase tstA that catalyzes the formation of a C12-fatty acyl-ACP, starting from one acetate and 5 malonate units. The hydrolase tstM is involved in the release of the C12-fatty acyl chain from phiA. The alkylcitrate synthase (ACS) tstJ and the alkylcitrate dehydratase (ACDH) tstI then give rise to decarboxylated monomeric anhydrides by coupling the C12-fatty acyl chain with oxalacetic acid. The cyclase tstC is responsible for the dimerization of the monomeric anhydrides which leads to the production of prephomoidride that contains the characteristic bicyclo[4.3.1]deca-1,6-diene system of phomoidrides. Iterative oxidation catalyzed by the alpha-ketoglutarate-dependent dioxygenase tstK produced then phomoidride A. Finally, the methyltransferase tstE converts phomoidride A to phomoidride B via an acetalization reaction. The phosphatidylethanolamine-binding protein tstB and tstN are not essential for dimerization and their functions have still to be determined. The chain is Dimerizing cyclase tstC from Talaromyces stipitatus (strain ATCC 10500 / CBS 375.48 / QM 6759 / NRRL 1006) (Penicillium stipitatum).